A 24-amino-acid polypeptide reads, in one-letter code: Ascaphin-7 (24 aa).

In terms of tissue distribution, expressed by the skin glands.

The protein localises to the secreted. Functionally, antimicrobial peptide that shows higher potency against Gram-negative bacteria than against Gram-positive bacteria. Has a very week hemolytic activity. This chain is Ascaphin-7, found in Ascaphus truei (Coastal tailed frog).